The sequence spans 361 residues: Phospho-N-acetylmuramoyl-pentapeptide-transferase (361 aa).

The next 10 membrane-spanning stretches (helical) occupy residues 27-47 (GALF…ISLL), 72-92 (TPTM…LLWA), 99-119 (VWIT…DDYL), 139-159 (ALIA…GLAY), 169-189 (AIVN…VGAG), 200-220 (GLAI…AYLV), 240-260 (LAVV…FNAP), 264-284 (IFMG…VAVA), 289-309 (IVLA…IIQV), and 338-358 (QVVI…LATL).

The protein belongs to the glycosyltransferase 4 family. MraY subfamily. It depends on Mg(2+) as a cofactor.

The protein resides in the cell inner membrane. It catalyses the reaction UDP-N-acetyl-alpha-D-muramoyl-L-alanyl-gamma-D-glutamyl-meso-2,6-diaminopimeloyl-D-alanyl-D-alanine + di-trans,octa-cis-undecaprenyl phosphate = di-trans,octa-cis-undecaprenyl diphospho-N-acetyl-alpha-D-muramoyl-L-alanyl-D-glutamyl-meso-2,6-diaminopimeloyl-D-alanyl-D-alanine + UMP. Its pathway is cell wall biogenesis; peptidoglycan biosynthesis. Its function is as follows. Catalyzes the initial step of the lipid cycle reactions in the biosynthesis of the cell wall peptidoglycan: transfers peptidoglycan precursor phospho-MurNAc-pentapeptide from UDP-MurNAc-pentapeptide onto the lipid carrier undecaprenyl phosphate, yielding undecaprenyl-pyrophosphoryl-MurNAc-pentapeptide, known as lipid I. This is Phospho-N-acetylmuramoyl-pentapeptide-transferase from Methylobacterium nodulans (strain LMG 21967 / CNCM I-2342 / ORS 2060).